The primary structure comprises 726 residues: Cyclic nucleotide-gated ion channel 2 (726 aa).

The Cytoplasmic segment spans residues methionine 1–alanine 127. The segment at isoleucine 26–glutamate 46 is disordered. Residues glycine 36–aspartate 45 show a composition bias toward low complexity. Residues leucine 128 to isoleucine 148 form a helical membrane-spanning segment. Over glycine 149–alanine 162 the chain is Extracellular. The helical transmembrane segment at phenylalanine 163–tryptophan 183 threads the bilayer. At leucine 184 to threonine 219 the chain is on the cytoplasmic side. Residues glycine 220–valine 240 form a helical membrane-spanning segment. The Extracellular segment spans residues proline 241 to threonine 254. A helical membrane pass occupies residues isoleucine 255–methionine 275. Topologically, residues arginine 276–threonine 282 are cytoplasmic. The helical transmembrane segment at glycine 283–alanine 303 threads the bilayer. Topologically, residues serine 304–tryptophan 424 are extracellular. A helical transmembrane segment spans residues leucine 425–isoleucine 445. Topologically, residues glycine 446–glutamate 726 are cytoplasmic. A nucleoside 3',5'-cyclic phosphate is bound by residues leucine 531 to tyrosine 661 and aspartate 600. Positions phenylalanine 645–tyrosine 661 are calmodulin-binding. Residues arginine 666–proline 695 form the IQ domain.

The protein belongs to the cyclic nucleotide-gated cation channel (TC 1.A.1.5) family. In terms of assembly, homotetramer or heterotetramer (Potential). Binds calmodulin-1/4 with a higher affinity than calmodulin-2/3/5. Expressed in the whole plant but only weakly in roots. Strongly expressed in the expanded cotyledons of 14-day-old seedlings and detected later in leaves after the transition to flowering. Also detected in flowers during organ senescence and in the dehiscence zone of siliques.

It is found in the cell membrane. Functionally, acts as a cyclic nucleotide-gated ion channel. Permeable to potassium and calcium in a cyclic nucleotide-dependent fashion (cAMP or cGMP). Could also transport lithium, cesium and rubium and displays a strong selectivity against sodium. Seems to directly participate in pathogen-induced calcium influx. May function in homeostasis, re-establishing ionic balance after defense action and/or other stimuli. Could mediate the initiation of the developmentally regulated cell death programs. In Arabidopsis thaliana (Mouse-ear cress), this protein is Cyclic nucleotide-gated ion channel 2 (CNGC2).